We begin with the raw amino-acid sequence, 651 residues long: MGKIIGIDLGTTNSCVAVLEGGNPVVIPNAEGGRTTPSIVAFGKSGERLVGQLAKRQAITNAENTIFSIKRFIGRRWEETAQERARVPYACVPGRDGMVDVQIRDRTYTPQEISAMVLQKLKQDAEAYLGEPVTQAVITVPAYFSDAQRQATKDAGAIAGLEVLRIINEPTAASLAYGIDKQDQDQTILVFDLGGGTFDVSILQLGDGVFEVRSTAGNNHLGGDNFDECIVDWLLACFKEQEGIDLSKDKMALQRLREAAEKAKVELSGTLSTSINLPFITADETGPKHLEMELTRSKFEELCAHLVQATLEPMQQAIADAGLTVEEIDRVLLVGGSTRIPAIQELVKQFCGKNPDRSVNPDEAVAIGAAIQGGILGKETTVKDLLLLDVTPLSLGLETLGGVFTKIIERNTTLPTSKTQTFSTASDGQTVVEIAVYQGERPIAKDNKQLACFELTGIAPAPRGVPQIDVTFDIDANGILSVSAVDRATGRQQSVRITNRGGLSSMEIERMRQEAQIYAQVDQIKKEIAELRNQADALLYSYESTIKNHGITLSPELRARIEPVVQSMQAAMVDDNITPDEIRKRMEALQQALVTLGSVVYQQTAGGSMMTSTPTMGRATMSSQATQVLDSEATIISDNEETVVSDYEAVD.

Thr-197 is modified (phosphothreonine; by autocatalysis).

Belongs to the heat shock protein 70 family.

Functionally, acts as a chaperone. This Thermosynechococcus vestitus (strain NIES-2133 / IAM M-273 / BP-1) protein is Chaperone protein dnaK1 (dnaK1).